The following is a 99-amino-acid chain: Large ribosomal subunit protein uL23 (99 aa).

This sequence belongs to the universal ribosomal protein uL23 family. As to quaternary structure, part of the 50S ribosomal subunit. Contacts protein L29, and trigger factor when it is bound to the ribosome.

Its function is as follows. One of the early assembly proteins it binds 23S rRNA. One of the proteins that surrounds the polypeptide exit tunnel on the outside of the ribosome. Forms the main docking site for trigger factor binding to the ribosome. This chain is Large ribosomal subunit protein uL23, found in Saccharopolyspora erythraea (strain ATCC 11635 / DSM 40517 / JCM 4748 / NBRC 13426 / NCIMB 8594 / NRRL 2338).